Here is a 501-residue protein sequence, read N- to C-terminus: Cytochrome P450 90A3 (501 aa).

The helical transmembrane segment at 2–22 (AAAALLLLAAAAAIVVVAMVL) threads the bilayer. Residue C446 coordinates heme.

This sequence belongs to the cytochrome P450 family. Heme serves as cofactor. As to expression, highly expressed in shoot apex and inflorenscence. Expressed in roots, stems, leaf blades and leaf sheaths.

Its subcellular location is the membrane. It functions in the pathway plant hormone biosynthesis; brassinosteroid biosynthesis. Catalyzes the C23-alpha-hydroxylation step in brassinosteroid biosynthesis. Converts 6-deoxocathasterone (6-deoxoCT) to 6-deoxoteasterone (6-deoxoTE) in the late C6-oxidation pathway and cathasterone (CT) to teasterone (TE) in the early C6-oxidation pathway of brassinolide (BL) biosynthesis. This chain is Cytochrome P450 90A3, found in Oryza sativa subsp. japonica (Rice).